We begin with the raw amino-acid sequence, 73 residues long: MMTKTNLKMGARTLALSVLATLVLSASALAKIEEGKLVIWINGDKGYNGLAQVGEKFEKDTGVNVTVEHPDKL.

An N-terminal signal peptide occupies residues 1 to 30 (MMTKTNLKMGARTLALSVLATLVLSASALA).

Belongs to the bacterial solute-binding protein 1 family.

The protein localises to the periplasm. In terms of biological role, involved in the high-affinity maltose membrane transport system. Initial receptor for the active transport of and chemotaxis toward maltooligosaccharides. This Photorhabdus luminescens (Xenorhabdus luminescens) protein is Maltose-binding periplasmic protein (malE).